The sequence spans 152 residues: Lipoprotein signal peptidase (152 aa).

3 helical membrane passes run 5–25 (LFVL…FWIV), 61–81 (WFFV…LATH), and 84–104 (LNIW…GNFI). Residues Asp114 and Asp130 contribute to the active site. A helical membrane pass occupies residues 125–145 (IFNVADSYLTVGVILLVICLW).

It belongs to the peptidase A8 family.

Its subcellular location is the cell membrane. It catalyses the reaction Release of signal peptides from bacterial membrane prolipoproteins. Hydrolyzes -Xaa-Yaa-Zaa-|-(S,diacylglyceryl)Cys-, in which Xaa is hydrophobic (preferably Leu), and Yaa (Ala or Ser) and Zaa (Gly or Ala) have small, neutral side chains.. It functions in the pathway protein modification; lipoprotein biosynthesis (signal peptide cleavage). Functionally, this protein specifically catalyzes the removal of signal peptides from prolipoproteins. The protein is Lipoprotein signal peptidase of Streptococcus pyogenes serotype M2 (strain MGAS10270).